A 290-amino-acid polypeptide reads, in one-letter code: NAD kinase (290 aa).

Aspartate 75 serves as the catalytic Proton acceptor. NAD(+)-binding positions include aspartate 75–glycine 76, asparagine 148–glutamate 149, aspartate 178, threonine 189–serine 194, and glutamine 247.

The protein belongs to the NAD kinase family. It depends on a divalent metal cation as a cofactor.

The protein localises to the cytoplasm. It carries out the reaction NAD(+) + ATP = ADP + NADP(+) + H(+). Involved in the regulation of the intracellular balance of NAD and NADP, and is a key enzyme in the biosynthesis of NADP. Catalyzes specifically the phosphorylation on 2'-hydroxyl of the adenosine moiety of NAD to yield NADP. The chain is NAD kinase from Wolinella succinogenes (strain ATCC 29543 / DSM 1740 / CCUG 13145 / JCM 31913 / LMG 7466 / NCTC 11488 / FDC 602W) (Vibrio succinogenes).